The sequence spans 1171 residues: Protein WWC2 (1171 aa).

WW domains follow at residues 9-42 and 56-89; these read LPLP…DPRD and NELP…DPRK. Coiled-coil stretches lie at residues 120–193, 223–257, and 301–420; these read KEQR…YKEQ, ELKS…LEEA, and LAEK…KSAT. Disordered regions lie at residues 521-552 and 603-637; these read SPTA…LSPP and QALA…KNPD. Residues 534–551 show a composition bias toward low complexity; the sequence is PKSVTSLSSLSSLSSLSP. 2 stretches are compositionally biased toward basic and acidic residues: residues 606-616 and 625-637; these read AERKSTGEGLR and GRTD…KNPD. Residues 684–806 enclose the C2 domain; that stretch reads GAAQAQLILR…FSNDVHTQWY (123 aa). Coiled coils occupy residues 836–870 and 1047–1123; these read LDLD…EQLC and DLEL…NAEK.

It belongs to the WWC family.

Its subcellular location is the cytoplasm. The protein resides in the cytosol. In terms of biological role, negative regulator of the Hippo signaling pathway, also known as the Salvador-Warts-Hippo (SWH) pathway. In Xenopus tropicalis (Western clawed frog), this protein is Protein WWC2 (wwc2).